We begin with the raw amino-acid sequence, 175 residues long: MEPLQITEEIQNWMHKAFQMAQDALNNGEVPVGCLMVYGNQVVGKGRNEVNETKNATQHAEMVAIDQVLDWCEMNSKKSTDVFENIVLYVTVEPCIMCAGALRLLKIPLVVYGCRNERFGGCGSVLNVSGDDIPDTGTKFKCIGGYQAEKAIELLKTFYKQENPNAPKSKVRKKE.

The CMP/dCMP-type deaminase domain occupies Glu-8–Ile-133. His-59 contacts Zn(2+). Glu-61 functions as the Proton donor in the catalytic mechanism. 2 residues coordinate Zn(2+): Cys-95 and Cys-98.

It belongs to the cytidine and deoxycytidylate deaminase family. ADAT2 subfamily. It depends on Zn(2+) as a cofactor.

It catalyses the reaction adenosine(34) in tRNA + H2O + H(+) = inosine(34) in tRNA + NH4(+). Functionally, probably participates in deamination of adenosine-34 to inosine in many tRNAs. This chain is tRNA-specific adenosine deaminase 2 (adat2), found in Xenopus laevis (African clawed frog).